The following is a 310-amino-acid chain: Cytochrome f (310 aa).

An N-terminal signal peptide occupies residues 1 to 23 (MRRLLSSTFAALIVGLAVFSAPA). Heme contacts are provided by Y28, C48, C51, and H52. Residues 277-297 (IYGMLAFFAAVALAQIMLVLK) traverse the membrane as a helical segment.

The protein belongs to the cytochrome f family. In terms of assembly, the 4 large subunits of the cytochrome b6-f complex are cytochrome b6, subunit IV (17 kDa polypeptide, PetD), cytochrome f and the Rieske protein, while the 4 small subunits are PetG, PetL, PetM and PetN. The complex functions as a dimer. Requires heme as cofactor.

Its subcellular location is the cellular thylakoid membrane. In terms of biological role, component of the cytochrome b6-f complex, which mediates electron transfer between photosystem II (PSII) and photosystem I (PSI), cyclic electron flow around PSI, and state transitions. This is Cytochrome f from Synechococcus sp. (strain CC9311).